The chain runs to 154 residues: 6,7-dimethyl-8-ribityllumazine synthase (154 aa).

Residues Phe-24, 56–58, and 80–82 each bind 5-amino-6-(D-ribitylamino)uracil; these read SFE and AVV. 85–86 contacts (2S)-2-hydroxy-3-oxobutyl phosphate; sequence ET. Catalysis depends on His-88, which acts as the Proton donor. Phe-113 contributes to the 5-amino-6-(D-ribitylamino)uracil binding site. Arg-127 is a (2S)-2-hydroxy-3-oxobutyl phosphate binding site.

It belongs to the DMRL synthase family.

The enzyme catalyses (2S)-2-hydroxy-3-oxobutyl phosphate + 5-amino-6-(D-ribitylamino)uracil = 6,7-dimethyl-8-(1-D-ribityl)lumazine + phosphate + 2 H2O + H(+). Its pathway is cofactor biosynthesis; riboflavin biosynthesis; riboflavin from 2-hydroxy-3-oxobutyl phosphate and 5-amino-6-(D-ribitylamino)uracil: step 1/2. Its function is as follows. Catalyzes the formation of 6,7-dimethyl-8-ribityllumazine by condensation of 5-amino-6-(D-ribitylamino)uracil with 3,4-dihydroxy-2-butanone 4-phosphate. This is the penultimate step in the biosynthesis of riboflavin. This is 6,7-dimethyl-8-ribityllumazine synthase from Thermococcus gammatolerans (strain DSM 15229 / JCM 11827 / EJ3).